The sequence spans 253 residues: MKILICNDDGYQAPGLVALYDALKDVAEVEVVAPEQNNSAKSNALTLHTPMYVCRASNGFRYINGTPADCVHIALTGLLGYRPDLVLAGINNGANMGDDTIYSGTVGAAMEGYLFGIPAIAFSQVEKNWSHLASAARKARDLVLQMSQQDLIGSSPWLLNVNIPNLTFDEIAHVKLCRLGRRHAAEAVITQVSPRGDTMYWIGAAGPAKDEAEGTDFHATSLGHIAMTPLKVDLTDHDSLGYWAQTAAKLTLA.

Residues Asp-8, Asp-9, Ser-39, and Asn-91 each contribute to the a divalent metal cation site.

This sequence belongs to the SurE nucleotidase family. Requires a divalent metal cation as cofactor.

The protein resides in the cytoplasm. The enzyme catalyses a ribonucleoside 5'-phosphate + H2O = a ribonucleoside + phosphate. Nucleotidase that shows phosphatase activity on nucleoside 5'-monophosphates. This is 5'-nucleotidase SurE from Albidiferax ferrireducens (strain ATCC BAA-621 / DSM 15236 / T118) (Rhodoferax ferrireducens).